A 202-amino-acid chain; its full sequence is Superoxide dismutase [Mn] (202 aa).

Mn(2+) is bound by residues His-27, His-82, Asp-164, and His-168.

The protein belongs to the iron/manganese superoxide dismutase family. In terms of assembly, homodimer. Requires Mn(2+) as cofactor.

It carries out the reaction 2 superoxide + 2 H(+) = H2O2 + O2. Destroys superoxide anion radicals which are normally produced within the cells and which are toxic to biological systems. The sequence is that of Superoxide dismutase [Mn] (sodA) from Listeria innocua serovar 6a (strain ATCC BAA-680 / CLIP 11262).